A 176-amino-acid chain; its full sequence is 2-oxo-4-hydroxy-4-carboxy-5-ureidoimidazoline decarboxylase (176 aa).

His70 acts as the Proton donor; for OHCU decarboxylase activity in catalysis. Residues Pro71, 83-87 (SQEEQ), and 118-122 (FIMAV) each bind substrate. Positions 72-96 (DLGERTEMTDESQEEQASAGLDRLP) are disordered.

The protein belongs to the OHCU decarboxylase family.

The enzyme catalyses 5-hydroxy-2-oxo-4-ureido-2,5-dihydro-1H-imidazole-5-carboxylate + H(+) = (S)-allantoin + CO2. The protein operates within purine metabolism; urate degradation; (S)-allantoin from urate: step 3/3. Functionally, catalyzes the stereoselective decarboxylation of 2-oxo-4-hydroxy-4-carboxy-5-ureidoimidazoline (OHCU) to (S)-allantoin. The chain is 2-oxo-4-hydroxy-4-carboxy-5-ureidoimidazoline decarboxylase from Halalkalicoccus jeotgali (strain DSM 18796 / CECT 7217 / JCM 14584 / KCTC 4019 / B3).